The primary structure comprises 512 residues: Apolipoprotein N-acyltransferase (512 aa).

A run of 6 helical transmembrane segments spans residues 5–25, 56–76, 92–112, 118–138, 168–188, and 195–215; these read LDKYWQHPALYWPLLILFAAA, FAVSSAYLFGLTAYTTQFYWI, VPLTFLLPAYLALYPALCFWL, LPRGIKIGLVLPILWTLTEFA, LGGIHMVTLATAFLGVWLVLA, and SGKRLLPIILIAALLAAGYTA. Positions 233–477 constitute a CN hydrolase domain; that stretch reads LQGNIDQTLK…ETVLEGHIKG (245 aa). Glutamate 271 acts as the Proton acceptor in catalysis. Lysine 337 is an active-site residue. The active-site Nucleophile is cysteine 389. A helical transmembrane segment spans residues 487–507; that stretch reads TGSSWWLMGILALAALILFIF.

Belongs to the CN hydrolase family. Apolipoprotein N-acyltransferase subfamily.

It localises to the cell inner membrane. It carries out the reaction N-terminal S-1,2-diacyl-sn-glyceryl-L-cysteinyl-[lipoprotein] + a glycerophospholipid = N-acyl-S-1,2-diacyl-sn-glyceryl-L-cysteinyl-[lipoprotein] + a 2-acyl-sn-glycero-3-phospholipid + H(+). The protein operates within protein modification; lipoprotein biosynthesis (N-acyl transfer). In terms of biological role, catalyzes the phospholipid dependent N-acylation of the N-terminal cysteine of apolipoprotein, the last step in lipoprotein maturation. This Neisseria meningitidis serogroup B (strain ATCC BAA-335 / MC58) protein is Apolipoprotein N-acyltransferase.